Consider the following 535-residue polypeptide: Proto-oncogene tyrosine-protein kinase Src (535 aa).

The disordered stretch occupies residues 1–56 (MGSNKSKPKDASQRRRSLEPSENVHGAGGAFPASQTPSKPASADGHRGPSAAFVPP). The N-myristoyl glycine moiety is linked to residue Gly2. A compositionally biased stretch (basic and acidic residues) spans 7–19 (KPKDASQRRRSLE). A phosphoserine mark is found at Ser17, Ser21, and Ser74. One can recognise an SH3 domain in the interval 83–144 (GGVTTFVALY…PSNYVAPSDS (62 aa)). Residues 150-247 (WYFGKITRRE…GLCHRLTTVC (98 aa)) enclose the SH2 domain. At Tyr186 the chain carries Phosphotyrosine. Residues 269-522 (LRLEVKLGQG…YLQAFLEDYF (254 aa)) form the Protein kinase domain. Residues 275 to 283 (LGQGCFGEV) and Lys297 contribute to the ATP site. The Proton acceptor role is filled by Asp388. At Tyr418 the chain carries Phosphotyrosine; by autocatalysis. Tyr418 carries the phosphotyrosine; by FAK2 modification. Tyr529 is subject to Phosphotyrosine; by CSK.

Belongs to the protein kinase superfamily. Tyr protein kinase family. SRC subfamily. Part of a complex comprised of PTPRA, BCAR1, BCAR3 (via SH2 domain) and SRC; the formation of the complex is dependent on integrin mediated-tyrosine phosphorylation of PTPRA. Interacts with CDCP1, TGFB1I1 and TOM1L2. Interacts with DDEF1/ASAP1 via its SH3 domain. Interacts with CCPG1. Interacts with the cytoplasmic domain of MUC1, phosphorylates it and increases binding of MUC1 with beta-catenin. Interacts with RALGPS1 via its SH3 domain. Interacts with CAV2 (tyrosine phosphorylated form). Interacts (via the SH3 domain and the protein kinase domain) with ARRB1; the interaction is independent of the phosphorylation state of SRC C-terminus. Interacts with FCAMR and PXN. Interacts with ARRB2. Interacts with ARRB1. Interacts with SRCIN1. Interacts with NDFIP2 and more weakly with NDFIP1. Interacts with PIK3CA and/or PIK3C2B, PTK2/FAK1, ESR1 (dimethylated on arginine) and FAK. Interacts (via SH2 and SH3 domain) with TNK2. Interacts (via protein kinase domain) with the tyrosine phosphorylated form of RUNX3 (via runt domain). Interacts with TRAF3 (via RING-type zinc finger domain). Interacts with RIGI, MAVS and TBK1. Interacts (via SH2 domain) with RACK1; the interaction is enhanced by tyrosine phosphorylation of RACK1 and inhibits SRC activity. Interacts (via SH2 domain) with the 'Tyr-402' phosphorylated form of PTK2B/PYK2. Interacts (via SH2 domain) with FLT3 (tyrosine phosphorylated). Identified in a complex containing FGFR4, NCAM1, CDH2, PLCG1, FRS2, SRC, SHC1, GAP43 and CTTN. Interacts with EPHB1; activates the MAPK/ERK cascade to regulate cell migration. Interacts with ERBB2 and STAT1. Interacts with PDGFRA (tyrosine phosphorylated). Interacts with CSF1R. Interacts (via SH2 domain) with the 'Tyr-9' phosphorylated form of PDPK1. Interacts with DDR2. Interacts with AMOTL2; this interaction regulates the translocation of phosphorylated SRC to peripheral cell-matrix adhesion sites. Interacts with DDR1 and DAB2. Interacts with TRAP1. Interacts with CBLC; the interaction is enhanced when SRC is phosphorylated at 'Tyr-424'. Interacts with ARHGEF5. Interacts (via cytoplasmic domain) with CEACAM1 (via SH2 domain); this interaction is regulated by trans-homophilic cell adhesion. Interacts with MPP2. Interacts with PRR7. Interacts (via kinase domain and to a lesser extent the SH2 domain) directly with PDLIM4; this interaction results in PTPN13-mediated dephosphorylation of this protein leading to its inactivation. Interacts with P85 (PIK3R1 or PIK3R2). Interacts with HNRNPA2B1. Interacts with IL6ST/gp130. Interacts (via SH3 domain) with PELP1 in the presence of 17-beta-estradiol. Interacts with AMBRA1. Post-translationally, myristoylated at Gly-2, and this is essential for targeting to membranes. In terms of processing, dephosphorylated at Tyr-529 by PTPRJ. Phosphorylated on Tyr-529 by c-Src kinase (CSK). The phosphorylated form is termed pp60c-src. Dephosphorylated by PTPRJ at Tyr-418. Normally maintained in an inactive conformation with the SH2 domain engaged with Tyr-529, the SH3 domain engaged with the SH2-kinase linker, and Tyr-418 dephosphorylated. Dephosphorylation of Tyr-529 as a result of protein tyrosine phosphatase (PTP) action disrupts the intramolecular interaction between the SH2 domain and Tyr-529, Tyr-418 can then become autophosphorylated, resulting in SRC activation. Phosphorylation of Tyr-529 by CSK allows this interaction to reform, resulting in SRC inactivation. CDK5-mediated phosphorylation at Ser-74 targets SRC to ubiquitin-dependent degradation and thus leads to cytoskeletal reorganization. Phosphorylated by PTK2/FAK1; this enhances kinase activity. Phosphorylated by PTK2B/PYK2; this enhances kinase activity. Upon activation of IL6ST by IL6, Tyr-418 is phosphorylated and Tyr-529 dephosphorylated. Displays reduced levels of autophosphorylation at Tyr-418 compared to isoform 2. Post-translationally, displays enhanced levels of autophosphorylation at Tyr-418 compared to isoform 1. In terms of processing, S-nitrosylation is important for activation of its kinase activity. Ubiquitinated in response to CDK5-mediated phosphorylation. Ubiquitination mediated by CBLC requires SRC autophosphorylation at Tyr-418 and may lead to lysosomal degradation.

It is found in the cell membrane. The protein localises to the mitochondrion inner membrane. Its subcellular location is the nucleus. The protein resides in the cytoplasm. It localises to the cytoskeleton. It is found in the perinuclear region. The protein localises to the cell junction. Its subcellular location is the focal adhesion. It catalyses the reaction L-tyrosyl-[protein] + ATP = O-phospho-L-tyrosyl-[protein] + ADP + H(+). Its activity is regulated as follows. Phosphorylation by CSK at Tyr-529 inhibits kinase activity. Inhibitory phosphorylation at Tyr-529 is enhanced by heme. Further phosphorylation by CDK1 partially reactivates CSK-inactivated SRC and facilitates complete reactivation by protein tyrosine phosphatase PTPRC. Integrin engagement stimulates kinase activity. Phosphorylation by PTK2/FAK1 enhances kinase activity. Butein and pseudosubstrate-based peptide inhibitors like CIYKYYF act as inhibitors. Phosphorylation at Tyr-418 increases kinase activity. Non-receptor protein tyrosine kinase which is activated following engagement of many different classes of cellular receptors including immune response receptors, integrins and other adhesion receptors, receptor protein tyrosine kinases, G protein-coupled receptors as well as cytokine receptors. Participates in signaling pathways that control a diverse spectrum of biological activities including gene transcription, immune response, cell adhesion, cell cycle progression, apoptosis, migration, and transformation. Due to functional redundancy between members of the SRC kinase family, identification of the specific role of each SRC kinase is very difficult. SRC appears to be one of the primary kinases activated following engagement of receptors and plays a role in the activation of other protein tyrosine kinase (PTK) families. Receptor clustering or dimerization leads to recruitment of SRC to the receptor complexes where it phosphorylates the tyrosine residues within the receptor cytoplasmic domains. Plays an important role in the regulation of cytoskeletal organization through phosphorylation of specific substrates such as AFAP1. Phosphorylation of AFAP1 allows the SRC SH2 domain to bind AFAP1 and to localize to actin filaments. Cytoskeletal reorganization is also controlled through the phosphorylation of cortactin (CTTN). When cells adhere via focal adhesions to the extracellular matrix, signals are transmitted by integrins into the cell resulting in tyrosine phosphorylation of a number of focal adhesion proteins, including PTK2/FAK1 and paxillin (PXN). In addition to phosphorylating focal adhesion proteins, SRC is also active at the sites of cell-cell contact adherens junctions and phosphorylates substrates such as beta-catenin (CTNNB1), delta-catenin (CTNND1), and plakoglobin (JUP). Another type of cell-cell junction, the gap junction, is also a target for SRC, which phosphorylates connexin-43 (GJA1). SRC is implicated in regulation of pre-mRNA-processing and phosphorylates RNA-binding proteins such as KHDRBS1. Phosphorylates PKP3 at 'Tyr-195' in response to reactive oxygen species, which may cause the release of PKP3 from desmosome cell junctions into the cytoplasm. Also plays a role in PDGF-mediated tyrosine phosphorylation of both STAT1 and STAT3, leading to increased DNA binding activity of these transcription factors. Involved in the RAS pathway through phosphorylation of RASA1 and RASGRF1. Plays a role in EGF-mediated calcium-activated chloride channel activation. Required for epidermal growth factor receptor (EGFR) internalization through phosphorylation of clathrin heavy chain (CLTC and CLTCL1) at 'Tyr-1477'. Involved in beta-arrestin (ARRB1 and ARRB2) desensitization through phosphorylation and activation of GRK2, leading to beta-arrestin phosphorylation and internalization. Has a critical role in the stimulation of the CDK20/MAPK3 mitogen-activated protein kinase cascade by epidermal growth factor. Might be involved not only in mediating the transduction of mitogenic signals at the level of the plasma membrane but also in controlling progression through the cell cycle via interaction with regulatory proteins in the nucleus. Plays an important role in osteoclastic bone resorption in conjunction with PTK2B/PYK2. Both the formation of a SRC-PTK2B/PYK2 complex and SRC kinase activity are necessary for this function. Recruited to activated integrins by PTK2B/PYK2, thereby phosphorylating CBL, which in turn induces the activation and recruitment of phosphatidylinositol 3-kinase to the cell membrane in a signaling pathway that is critical for osteoclast function. Promotes energy production in osteoclasts by activating mitochondrial cytochrome C oxidase. Phosphorylates DDR2 on tyrosine residues, thereby promoting its subsequent autophosphorylation. Phosphorylates RUNX3 and COX2 on tyrosine residues, TNK2 on 'Tyr-284' and CBL on 'Tyr-738'. Enhances RIGI-elicited antiviral signaling. Phosphorylates PDPK1 at 'Tyr-9', 'Tyr-373' and 'Tyr-376'. Phosphorylates BCAR1 at 'Tyr-226'. Phosphorylates CBLC at multiple tyrosine residues, phosphorylation at 'Tyr-341' activates CBLC E3 activity. Phosphorylates synaptic vesicle protein synaptophysin (SYP). Involved in anchorage-independent cell growth. Required for podosome formation. Mediates IL6 signaling by activating YAP1-NOTCH pathway to induce inflammation-induced epithelial regeneration. Phosphorylates OTUB1, promoting deubiquitination of RPTOR. In terms of biological role, non-receptor protein tyrosine kinase which phosphorylates synaptophysin with high affinity. Functionally, non-receptor protein tyrosine kinase which shows higher basal kinase activity than isoform 1, possibly due to weakened intramolecular interactions which enhance autophosphorylation of Tyr-418 and subsequent activation. The SH3 domain shows reduced affinity with the linker sequence between the SH2 and kinase domains which may account for the increased basal activity. Displays altered substrate specificity compared to isoform 1, showing weak affinity for synaptophysin and for peptide substrates containing class I or class II SH3 domain-binding motifs. Plays a role in L1CAM-mediated neurite elongation, possibly by acting downstream of L1CAM to drive cytoskeletal rearrangements involved in neurite outgrowth. The sequence is that of Proto-oncogene tyrosine-protein kinase Src from Mus musculus (Mouse).